Consider the following 591-residue polypeptide: Glutathione hydrolase (591 aa).

Residues 1–41 form the signal peptide; sequence MASKWIEEQPLVHRRDIRISSKSRIAAGLLVLLVLWRYGLP. An L-glutamate-binding site is contributed by arginine 122. Asparagine 135, asparagine 270, and asparagine 389 each carry an N-linked (GlcNAc...) asparagine glycan. The Nucleophile role is filled by threonine 393. L-glutamate-binding positions include threonine 411, glutamate 432, and 464-465; that span reads SA. Asparagine 534 carries an N-linked (GlcNAc...) asparagine glycan.

This sequence belongs to the gamma-glutamyltransferase family.

It carries out the reaction an N-terminal (5-L-glutamyl)-[peptide] + an alpha-amino acid = 5-L-glutamyl amino acid + an N-terminal L-alpha-aminoacyl-[peptide]. It catalyses the reaction glutathione + H2O = L-cysteinylglycine + L-glutamate. The enzyme catalyses an S-substituted glutathione + H2O = an S-substituted L-cysteinylglycine + L-glutamate. The protein operates within mycotoxin biosynthesis. Its function is as follows. Gamma-glutamyltransferase; part of the gene cluster that mediates the biosynthesis of the secondary metabolite ustiloxin B, an antimitotic tetrapeptide. First, ustA is processed by the subtilisin-like endoprotease Kex2 that is outside the ustiloxin B gene cluster, at the C-terminal side of Arg-Lys, after transfer to Golgi apparatus through the endoplasmic reticulum (ER). Cleavage by KEX2 generates 16 peptides YAIG-I to YAIG-XVI. To process the precursor peptide further, at least two peptidases are necessary to cleave the N-terminal and C-terminal sides of the Tyr-Ala-Ile-Gly core peptide which serves as backbone for the synthesis of ustiloxin B, through cyclization and modification of the tyrosine with a non-protein coding amino acid, norvaline. One of the two peptidases must be the serine peptidase ustP; and the other pepdidase is probably ustH. Macrocyclization of the core peptide derived from ustA requires the tyrosinase ustQ, as well as the homologous oxidases ustYa and ustYb, and leads to the production of the first cyclization product N-desmethylustiloxin F. For the formation of N-desmethylustiloxin F, three oxidation steps are required, hydroxylation at the benzylic position, hydroxylation at either the aromatic ring of Tyr or beta-position of Ile, and oxidative cyclization. UstQ may catalyze the oxidation of a phenol moiety, whereas the ustYa and ustYb are most likely responsible for the remaining two-step oxidations. N-desmethylustiloxin F is then methylated by ustM to yield ustiloxin F which in turn substrate of the cytochrome P450 monooxygenase ustC which catalyzes the formation of S-deoxyustiloxin H. The flavoprotein monooxygenases ustF1 and ustF2 then participate in the modification of the side chain of S-deoxyustiloxin H, leading to the synthesis of an oxime intermediate, via ustiloxin H. Finally, carboxylative dehydration performed by the cysteine desulfurase-like protein ustD yields ustiloxin B. The chain is Glutathione hydrolase from Aspergillus flavus (strain ATCC 200026 / FGSC A1120 / IAM 13836 / NRRL 3357 / JCM 12722 / SRRC 167).